A 152-amino-acid chain; its full sequence is Biotin carboxyl carrier protein of acetyl-CoA carboxylase (152 aa).

In terms of domain architecture, Biotinyl-binding spans 72–148 (IIDILSPISG…TKNQVLMKII (77 aa)). Lys114 is modified (N6-biotinyllysine).

The protein localises to the plastid. It localises to the chloroplast. It functions in the pathway lipid metabolism; fatty acid biosynthesis. Functionally, this protein is a component of the acetyl coenzyme A carboxylase complex; first, biotin carboxylase catalyzes the carboxylation of the carrier protein and then the transcarboxylase transfers the carboxyl group to form malonyl-CoA. The sequence is that of Biotin carboxyl carrier protein of acetyl-CoA carboxylase (accB) from Cyanidium caldarium (Red alga).